We begin with the raw amino-acid sequence, 321 residues long: Sideroflexin-3 (321 aa).

Position 1 is an N-acetylmethionine (Met1). A run of 4 helical transmembrane segments spans residues 146 to 164 (LGTA…ALGL), 174 to 194 (LVGR…NIPL), 225 to 245 (IFQV…IPPV), and 266 to 286 (LQVG…CALF).

It belongs to the sideroflexin family.

It is found in the mitochondrion membrane. It carries out the reaction L-serine(in) = L-serine(out). Functionally, mitochondrial serine transporter that mediates transport of serine into mitochondria, an important step of the one-carbon metabolism pathway. Mitochondrial serine is converted to glycine and formate, which then exits to the cytosol where it is used to generate the charged folates that serve as one-carbon donors. The sequence is that of Sideroflexin-3 (Sfxn3) from Rattus norvegicus (Rat).